A 288-amino-acid chain; its full sequence is DegV domain-containing protein DR_1903 (288 aa).

A DegV domain is found at 2–280 (IAVTTESTAD…PGVVAVLAFP (279 aa)). Hexadecanoate is bound by residues Thr59 and Thr93.

Its function is as follows. May bind long-chain fatty acids, such as palmitate, and may play a role in lipid transport or fatty acid metabolism. This Deinococcus radiodurans (strain ATCC 13939 / DSM 20539 / JCM 16871 / CCUG 27074 / LMG 4051 / NBRC 15346 / NCIMB 9279 / VKM B-1422 / R1) protein is DegV domain-containing protein DR_1903.